A 668-amino-acid polypeptide reads, in one-letter code: S-adenosyl-L-methionine-dependent tRNA 4-demethylwyosine synthase TYW1B (668 aa).

A Flavodoxin-like domain is found at 37-191 (CVQIVIEMQG…NFRAWKTKFI (155 aa)). FMN-binding positions include 43–47 (EMQGF) and 130–162 (VFGLGNSAYASHFNKVGKNVDKWLWMLGVHRVM). The interval 202–269 (RKKSCGGHCK…QSLNSIVDVE (68 aa)) is disordered. Basic and acidic residues-rich tracts occupy residues 213–223 (GKCESHQHGSE) and 233–243 (DELHHRDTKEE). A compositionally biased stretch (acidic residues) spans 244–255 (EPFESSSEEEFG). The region spanning 336-580 (LWNESHRCME…VDLIPEYEIA (245 aa)) is the Radical SAM core domain. [4Fe-4S] cluster is bound by residues Cys-352, Cys-356, and Cys-359.

It belongs to the TYW1 family. It depends on [4Fe-4S] cluster as a cofactor.

It carries out the reaction N(1)-methylguanosine(37) in tRNA(Phe) + pyruvate + S-adenosyl-L-methionine = 4-demethylwyosine(37) in tRNA(Phe) + 5'-deoxyadenosine + L-methionine + CO2 + H2O. It participates in tRNA modification; wybutosine-tRNA(Phe) biosynthesis. Its function is as follows. Probable component of the wybutosine biosynthesis pathway. Wybutosine is a hyper modified guanosine with a tricyclic base found at the 3'-position adjacent to the anticodon of eukaryotic phenylalanine tRNA. Catalyzes the condensation of N-methylguanine with 2 carbon atoms from pyruvate to form the tricyclic 4-demethylwyosine, an intermediate in wybutosine biosynthesis. This Homo sapiens (Human) protein is S-adenosyl-L-methionine-dependent tRNA 4-demethylwyosine synthase TYW1B (TYW1B).